A 506-amino-acid chain; its full sequence is Epstein-Barr nuclear antigen leader protein (506 aa).

2 disordered regions span residues 1–470 and 485–506; these read MGDR…PRPP and FEPP…EDED. At Ser-35 the chain carries Phosphoserine; by host.

The protein belongs to the lymphocryptovirus EBNA-LP family. As to quaternary structure, homooligomer. Interacts with host SP100; this interaction is important for EBNA-LP coactivator activity. Interacts with host HAX1, ERR1 and HSPA2. Interacts with host PRKDC and AKAP8L; these interactions modulate the coactivator function of EBNA-LP. Phosphorylated by the cellular protein kinase cdc2.

The protein resides in the host nucleus. In terms of biological role, plays an important role in the establishment of B-cell immortalization by acting as an EBNA2 coactivator. This transcriptional activation preferentially enhances the expression of the major viral protein LMP1. The interaction between EBNA-LP and host SP100 correlates with coactivation of EBNA2 and the relocalization of SP100 from PML nuclear bodies into nucleoplasm. This Epstein-Barr virus (strain B95-8) (HHV-4) protein is Epstein-Barr nuclear antigen leader protein (EBNA-LP).